The primary structure comprises 457 residues: Siroheme synthase (457 aa).

Residues 1–204 (MDHLPIFCQL…NDQKAITETT (204 aa)) are precorrin-2 dehydrogenase /sirohydrochlorin ferrochelatase. Residues 22–23 (DV) and 43–44 (LA) each bind NAD(+). Position 128 is a phosphoserine (Ser-128). The uroporphyrinogen-III C-methyltransferase stretch occupies residues 216 to 457 (GEVVLVGAGP…RDKLNWFSNH (242 aa)). Pro-225 contacts S-adenosyl-L-methionine. Asp-248 acts as the Proton acceptor in catalysis. The active-site Proton donor is Lys-270. Residues 301–303 (GGD), Ile-306, 331–332 (TA), Met-382, and Gly-411 each bind S-adenosyl-L-methionine.

It in the N-terminal section; belongs to the precorrin-2 dehydrogenase / sirohydrochlorin ferrochelatase family. The protein in the C-terminal section; belongs to the precorrin methyltransferase family.

The enzyme catalyses uroporphyrinogen III + 2 S-adenosyl-L-methionine = precorrin-2 + 2 S-adenosyl-L-homocysteine + H(+). It carries out the reaction precorrin-2 + NAD(+) = sirohydrochlorin + NADH + 2 H(+). It catalyses the reaction siroheme + 2 H(+) = sirohydrochlorin + Fe(2+). It functions in the pathway cofactor biosynthesis; adenosylcobalamin biosynthesis; precorrin-2 from uroporphyrinogen III: step 1/1. It participates in cofactor biosynthesis; adenosylcobalamin biosynthesis; sirohydrochlorin from precorrin-2: step 1/1. The protein operates within porphyrin-containing compound metabolism; siroheme biosynthesis; precorrin-2 from uroporphyrinogen III: step 1/1. Its pathway is porphyrin-containing compound metabolism; siroheme biosynthesis; siroheme from sirohydrochlorin: step 1/1. It functions in the pathway porphyrin-containing compound metabolism; siroheme biosynthesis; sirohydrochlorin from precorrin-2: step 1/1. Functionally, multifunctional enzyme that catalyzes the SAM-dependent methylations of uroporphyrinogen III at position C-2 and C-7 to form precorrin-2 via precorrin-1. Then it catalyzes the NAD-dependent ring dehydrogenation of precorrin-2 to yield sirohydrochlorin. Finally, it catalyzes the ferrochelation of sirohydrochlorin to yield siroheme. This chain is Siroheme synthase, found in Escherichia coli O81 (strain ED1a).